The following is a 285-amino-acid chain: 2-dehydro-3-deoxyphosphooctonate aldolase (285 aa).

This sequence belongs to the KdsA family.

The protein resides in the cytoplasm. It catalyses the reaction D-arabinose 5-phosphate + phosphoenolpyruvate + H2O = 3-deoxy-alpha-D-manno-2-octulosonate-8-phosphate + phosphate. The protein operates within carbohydrate biosynthesis; 3-deoxy-D-manno-octulosonate biosynthesis; 3-deoxy-D-manno-octulosonate from D-ribulose 5-phosphate: step 2/3. Its pathway is bacterial outer membrane biogenesis; lipopolysaccharide biosynthesis. The polypeptide is 2-dehydro-3-deoxyphosphooctonate aldolase (Acidovorax sp. (strain JS42)).